The following is a 529-amino-acid chain: GTPase Obg (529 aa).

The 158-residue stretch at 2 to 159 (PTFVDRVVLH…LDAVLELKTV (158 aa)) folds into the Obg domain. Residues 62 to 86 (FHPHQRASRGRPGQGSNRHGADGAD) form a disordered region. The region spanning 160–332 (ADVALVGFPS…LSLALADLVA (173 aa)) is the OBG-type G domain. GTP contacts are provided by residues 166 to 173 (GFPSAGKS), 191 to 195 (FTTLV), 213 to 216 (DVPG), 284 to 287 (NKID), and 313 to 315 (STA). The Mg(2+) site is built by Ser-173 and Thr-193. The OCT domain maps to 350–427 (PRAVNEPDFT…IGEVTFDWEP (78 aa)). Disordered regions lie at residues 434 to 494 (LGNG…DRLR) and 506 to 529 (ARRA…EEEG). Composition is skewed to low complexity over residues 461–472 (AGTAASGAAPSP) and 508–520 (RAAA…VRGE).

This sequence belongs to the TRAFAC class OBG-HflX-like GTPase superfamily. OBG GTPase family. As to quaternary structure, monomer. The cofactor is Mg(2+).

The protein resides in the cytoplasm. An essential GTPase which binds GTP, GDP and possibly (p)ppGpp with moderate affinity, with high nucleotide exchange rates and a fairly low GTP hydrolysis rate. Plays a role in control of the cell cycle, stress response, ribosome biogenesis and in those bacteria that undergo differentiation, in morphogenesis control. In Frankia casuarinae (strain DSM 45818 / CECT 9043 / HFP020203 / CcI3), this protein is GTPase Obg.